The following is a 722-amino-acid chain: Polyribonucleotide nucleotidyltransferase (722 aa).

The Mg(2+) site is built by D486 and D492. Residues 553–612 enclose the KH domain; that stretch reads PRITTIQIRPEFIKNVIGPGGKVIKDIIARTGAAINIEDSGRVDIASANGEAVKAAIAMI. One can recognise an S1 motif domain in the interval 622–690; sequence GKIYTGTVRK…KTGKIRLSRK (69 aa). The disordered stretch occupies residues 696–722; it reads RAAQQGAAAGEAAAQPAPAPTQPDAKA.

Belongs to the polyribonucleotide nucleotidyltransferase family. The cofactor is Mg(2+).

The protein resides in the cytoplasm. The enzyme catalyses RNA(n+1) + phosphate = RNA(n) + a ribonucleoside 5'-diphosphate. In terms of biological role, involved in mRNA degradation. Catalyzes the phosphorolysis of single-stranded polyribonucleotides processively in the 3'- to 5'-direction. This chain is Polyribonucleotide nucleotidyltransferase, found in Myxococcus xanthus (strain DK1622).